Consider the following 194-residue polypeptide: UPF0301 protein BPEN_258 (194 aa).

This sequence belongs to the UPF0301 (AlgH) family.

The polypeptide is UPF0301 protein BPEN_258 (Blochmanniella pennsylvanica (strain BPEN)).